Reading from the N-terminus, the 231-residue chain is Thymidylate kinase (231 aa).

10 to 17 (GGEGAGKT) is an ATP binding site.

It belongs to the thymidylate kinase family.

It catalyses the reaction dTMP + ATP = dTDP + ADP. In terms of biological role, phosphorylation of dTMP to form dTDP in both de novo and salvage pathways of dTTP synthesis. The chain is Thymidylate kinase from Acaryochloris marina (strain MBIC 11017).